A 144-amino-acid chain; its full sequence is (R)-specific enoyl-CoA hydratase (144 aa).

The 116-residue stretch at 13 to 128 folds into the MaoC-like domain; it reads DIKEGQSASL…TFRTTCTVAG (116 aa).

Homotetramer.

The catalysed reaction is a (3R)-3-hydroxyacyl-CoA = a (2E)-enoyl-CoA + H2O. Its function is as follows. Catalyzes the hydration of trans-2-enoyl-CoAs with a chain-length of 4-6 carbon atoms, forming the corresponding (3R)-3-hydroxyacyl-CoAs, which can then be utilized for the production of polyhydroxyalkanoates (PHA) polymers. Cannot use trans-2,3-octenoyl-CoA as substrate. The chain is (R)-specific enoyl-CoA hydratase from Rhodospirillum rubrum (strain ATCC 11170 / ATH 1.1.1 / DSM 467 / LMG 4362 / NCIMB 8255 / S1).